The sequence spans 280 residues: Acetylglutamate kinase (280 aa).

Residues 64 to 65 (GG), R86, and N177 each bind substrate.

The protein belongs to the acetylglutamate kinase family. ArgB subfamily.

Its subcellular location is the cytoplasm. The enzyme catalyses N-acetyl-L-glutamate + ATP = N-acetyl-L-glutamyl 5-phosphate + ADP. The protein operates within amino-acid biosynthesis; L-arginine biosynthesis; N(2)-acetyl-L-ornithine from L-glutamate: step 2/4. Catalyzes the ATP-dependent phosphorylation of N-acetyl-L-glutamate. The chain is Acetylglutamate kinase from Nautilia profundicola (strain ATCC BAA-1463 / DSM 18972 / AmH).